Reading from the N-terminus, the 476-residue chain is MTVRVRLAPSPTGTLHIGTARTAVFNWLFARHQNGKFLLRIEDTDKERSKPEFTENILDGLRWLGLDWDEEPVIQSERIEVHRQAISQLLAQGLAYRCYVSEQELDAMREAQRASGQPPRYDNRHRHLTGDQEEAYRAEGREAVIRFRIDDEATIAWTDMVRGPMQWRGADLGGDMVIARRAPATTVGDPLYNLVVVVDDAAMAISHVIRGEDHIANTAKQLLLYQALELNCPTFAHTPLILNPEGRKLSKRDGVTSIGDFQEMGYTAEALANYMTLLGWSVPEGTEERFTLRQAAEVFSFDRVNKAGAKFDWDKLNWLNAQVLHGWSPAELLAALEPRWQKQGWVVSDPLWANDLAVLLGPSLTLIEDGVTQARPFFEEPPLEEDGLKQLEQEGARPALQALLSALELNAWDGLDVERAQTLLKEAAASAEVKKGVLMKSLRAALLGRLQGPDLITTWALLARLGHDRQRLRRCL.

Residues 9 to 19 (PSPTGTLHIGT) carry the 'HIGH' region motif. A 'KMSKS' region motif is present at residues 248–252 (KLSKR). Residue Lys251 participates in ATP binding.

Belongs to the class-I aminoacyl-tRNA synthetase family. Glutamate--tRNA ligase type 1 subfamily. Monomer.

The protein resides in the cytoplasm. It carries out the reaction tRNA(Glu) + L-glutamate + ATP = L-glutamyl-tRNA(Glu) + AMP + diphosphate. Catalyzes the attachment of glutamate to tRNA(Glu) in a two-step reaction: glutamate is first activated by ATP to form Glu-AMP and then transferred to the acceptor end of tRNA(Glu). This chain is Glutamate--tRNA ligase, found in Synechococcus sp. (strain CC9311).